The primary structure comprises 280 residues: UPF0494 membrane protein C750.06c (280 aa).

Helical transmembrane passes span 107 to 127 (WPLL…KFEV), 144 to 164 (IWVP…SLIF), 178 to 198 (VIIA…GMII), and 199 to 219 (AALG…LYFG).

This sequence belongs to the UPF0494 family.

The protein localises to the cytoplasm. The protein resides in the vacuole. It is found in the membrane. The polypeptide is UPF0494 membrane protein C750.06c (Schizosaccharomyces pombe (strain 972 / ATCC 24843) (Fission yeast)).